A 147-amino-acid chain; its full sequence is Deoxyuridine 5'-triphosphate nucleotidohydrolase (147 aa).

Substrate is bound by residues 68–70, Asn-81, and 85–87; these read RSG and TID.

This sequence belongs to the dUTPase family. The cofactor is Mg(2+).

It catalyses the reaction dUTP + H2O = dUMP + diphosphate + H(+). Its pathway is pyrimidine metabolism; dUMP biosynthesis; dUMP from dCTP (dUTP route): step 2/2. This enzyme is involved in nucleotide metabolism: it produces dUMP, the immediate precursor of thymidine nucleotides and it decreases the intracellular concentration of dUTP so that uracil cannot be incorporated into DNA. This chain is Deoxyuridine 5'-triphosphate nucleotidohydrolase, found in Solibacter usitatus (strain Ellin6076).